Reading from the N-terminus, the 452-residue chain is mRNA export factor ICP27 homolog (452 aa).

Positions 42-164 are disordered; the sequence is EAIGSTPGED…RNDQTHDESY (123 aa). Positions 98–107 are enriched in basic and acidic residues; sequence SNHHGGRDVE. The span at 129-144 shows a compositional bias: basic residues; it reads SRKHRDRSLSNRRRRP. Residues 154–164 show a composition bias toward basic and acidic residues; it reads ERNDQTHDESY. 4 residues coordinate Zn(2+): Cys335, His417, Cys421, and Cys426. Residues 335–426 form a CHC2-type zinc finger; it reads CLLLNRDNDL…HQRECGRVEC (92 aa).

Belongs to the HHV-1 ICP27 protein family. In terms of assembly, homodimer. Homodimerization is required for transactivation. Associates in a complex with RNA, and host export factors NXF1/TAP and ALYREF; these interactions allow nuclear export of viral transcripts. Interacts with three host shuttling SR proteins SRSF1, SRSF3 and SRSF7. Interacts with host SRPK1. Interacts with IE62; this interaction enhances IE62 transactivation. Phosphorylated in vitro by SRPK1.

Its subcellular location is the host cytoplasm. It localises to the host nucleus. In terms of biological role, multifunctional regulator of the expression of viral genes that mediates nuclear export of viral intronless mRNAs. This immediate early (EI) protein promotes the nuclear export of viral intronless mRNAs by interacting with mRNAs and host NXF1/TAP. In Varicella-zoster virus (strain Dumas) (HHV-3), this protein is mRNA export factor ICP27 homolog.